The sequence spans 199 residues: Protein-methionine-sulfoxide reductase heme-binding subunit MsrQ (199 aa).

A run of 5 helical transmembrane segments spans residues tryptophan 10–valine 30, leucine 79–glutamate 99, leucine 118–tryptophan 138, tryptophan 147–tryptophan 167, and valine 169–leucine 189.

It belongs to the MsrQ family. Heterodimer of a catalytic subunit (MsrP) and a heme-binding subunit (MsrQ). It depends on FMN as a cofactor. Requires heme b as cofactor.

It localises to the cell inner membrane. Part of the MsrPQ system that repairs oxidized periplasmic proteins containing methionine sulfoxide residues (Met-O), using respiratory chain electrons. Thus protects these proteins from oxidative-stress damage caused by reactive species of oxygen and chlorine generated by the host defense mechanisms. MsrPQ is essential for the maintenance of envelope integrity under bleach stress, rescuing a wide series of structurally unrelated periplasmic proteins from methionine oxidation. MsrQ provides electrons for reduction to the reductase catalytic subunit MsrP, using the quinone pool of the respiratory chain. In Yersinia enterocolitica serotype O:8 / biotype 1B (strain NCTC 13174 / 8081), this protein is Protein-methionine-sulfoxide reductase heme-binding subunit MsrQ.